The sequence spans 229 residues: N-acetyltransferase MPR1 (229 aa).

Residues 65 to 219 (FNLEIESGKT…DAIIYGKDLT (155 aa)) form the N-acetyltransferase domain. N135 lines the substrate pocket. 145–150 (RGQKVG) is a CoA binding site. 172-173 (NL) is a substrate binding site.

It belongs to the acetyltransferase family. In terms of assembly, homodimer. Not glycosylated.

The protein localises to the cytoplasm. Its subcellular location is the mitochondrion. The catalysed reaction is L-glutamate 5-semialdehyde + acetyl-CoA = N-acetyl-L-glutamate 5-semialdehyde + CoA + H(+). N-acetyltransferase involved in oxidative stress resistance. Acetylates the toxic proline metabolism intermediate (S)-1-pyrroline-5-carboxylate (P5C), or more likely its spontaneously forming tautomer glutamate-5-semialdehyde (GSA) into N-acetyl-GSA for arginine synthesis in the mitochondria. P5C has been shown to increase the levels of reactive oxygen species (ROS) in the cell by inhibiting the function of the respiratory chain in the mitochondria. The enzyme is able to reduce intracellular ROS levels under P5C-induced oxidative stress and protects cells from damage by oxidative stress. Also acetylates and thereby detoxifies the proline analog azetidine-2-carboxylate (AZC), however it is unlikely that AZC is a natural substrate as it occurs only in plants belonging to the Lilaceae family. Does not acetylate proline. The protein is N-acetyltransferase MPR1 of Saccharomyces cerevisiae (Baker's yeast).